A 325-amino-acid chain; its full sequence is Syntaxin-16 (325 aa).

The Cytoplasmic segment spans residues 1 to 301; it reads MATRRLTDAF…AEQYQKKNRK (301 aa). Ser-41 bears the Phosphoserine mark. One can recognise a t-SNARE coiled-coil homology domain in the interval 230–292; sequence TLMVEERERE…EDGLKQLHKA (63 aa). A helical; Anchor for type IV membrane protein transmembrane segment spans residues 302 to 322; that stretch reads MLVILILFVIIIVLIVVLVGV. Residues 323–325 lie on the Vesicular side of the membrane; it reads KSR.

Belongs to the syntaxin family. Interacts with GCC2. Interacts with BAIAP3; this interaction is increased in the presence of calcium. As to expression, ubiquitous.

It is found in the golgi apparatus membrane. Its subcellular location is the cytoplasm. In terms of biological role, SNARE involved in vesicular transport from the late endosomes to the trans-Golgi network. In Homo sapiens (Human), this protein is Syntaxin-16 (STX16).